The sequence spans 208 residues: Proteasome subunit beta 2 (208 aa).

A propeptide spans Met-1–Lys-9 (removed in mature form; by autocatalysis). Thr-10 serves as the catalytic Nucleophile.

The protein belongs to the peptidase T1B family. As to quaternary structure, the 20S proteasome core is composed of 14 alpha and 14 beta subunits that assemble into four stacked heptameric rings, resulting in a barrel-shaped structure. The two inner rings, each composed of seven catalytic beta subunits, are sandwiched by two outer rings, each composed of seven alpha subunits. The catalytic chamber with the active sites is on the inside of the barrel. Has a gated structure, the ends of the cylinder being occluded by the N-termini of the alpha-subunits. Is capped at one or both ends by the proteasome regulatory ATPase, PAN.

The protein resides in the cytoplasm. It catalyses the reaction Cleavage of peptide bonds with very broad specificity.. With respect to regulation, the formation of the proteasomal ATPase PAN-20S proteasome complex, via the docking of the C-termini of PAN into the intersubunit pockets in the alpha-rings, triggers opening of the gate for substrate entry. Interconversion between the open-gate and close-gate conformations leads to a dynamic regulation of the 20S proteasome proteolysis activity. In terms of biological role, component of the proteasome core, a large protease complex with broad specificity involved in protein degradation. This Staphylothermus marinus (strain ATCC 43588 / DSM 3639 / JCM 9404 / F1) protein is Proteasome subunit beta 2.